The sequence spans 161 residues: MPSFDVVCEANMVEVKNAVEQANKEISTRFDFKGSDARVEQKEGELTAFADDDFKLDQVKDVLINKMAKRNVDVRFLDYGKVEKISGDKVKQVITIKKGVTGDLAKKIVRMIKDSKIKVQGSIQGDAVRVSGTKRDDLQAVIAMLRKDANEAPLDFNNFRD.

The protein belongs to the YajQ family.

Nucleotide-binding protein. The polypeptide is Nucleotide-binding protein Rmet_2899 (Cupriavidus metallidurans (strain ATCC 43123 / DSM 2839 / NBRC 102507 / CH34) (Ralstonia metallidurans)).